The primary structure comprises 1481 residues: Cystic fibrosis transmembrane conductance regulator (1481 aa).

The Cytoplasmic segment spans residues 1–77 (MQRSPLEKAS…KLINALRRCF (77 aa)). The helical transmembrane segment at 78 to 98 (FWRFMFYGIILYLGEVTKAVQ) threads the bilayer. The ABC transmembrane type-1 1 domain occupies 81–365 (FMFYGIILYL…WAVQTWYDSL (285 aa)). The Extracellular segment spans residues 99-122 (PLLLGRIIASYDPDNEAERSIAIY). The chain crosses the membrane as a helical span at residues 123–146 (LGIGLCLLFIVRTLLLHPAIFGLH). At 147–195 (HIGMQMRIAMFSLIYKKTLKLSSRVLDKISIGQLVSLLSNNLNKFDEGL) the chain is on the cytoplasmic side. The helical transmembrane segment at 196–216 (ALAHFVWIAPLQVTLLMGLLW) threads the bilayer. Over 217–222 (DLLQAS) the chain is Extracellular. Residues 223–243 (AFCGLAFLIVLALFQAGLGRM) form a helical membrane-spanning segment. Residues 244–298 (MMKYRDQRAGKINERLVITSEMIENIQSVKAYCWEEAMEKMIENLRQTELKLTRK) are Cytoplasmic-facing. The helical transmembrane segment at 299–319 (AAYVRYFNSSAFFFSGFFVVF) threads the bilayer. Residues 320–339 (LSVLPYALIKGIVLRRIFTT) lie on the Extracellular side of the membrane. The helical transmembrane segment at 340–358 (ISFCIVLRMAVTRQFPWAV) threads the bilayer. Topologically, residues 359-858 (QTWYDSLGAI…YLRYITIHKS (500 aa)) are cytoplasmic. ATP-binding positions include Trp-401, Ser-433, 457–464 (GSTGAGKT), and Gln-492. One can recognise an ABC transporter 1 domain in the interval 422–645 (NGDNSLFFSN…RPDFSSKLMG (224 aa)). Residue Cys-523 is the site of S-palmitoyl cysteine attachment. Phosphoserine occurs at positions 548 and 659. The tract at residues 653-831 (SAERRNSILT…EEINEDDLKE (179 aa)) is disordered R region. Ser-669 is modified (phosphoserine; by PKA). At Ser-685 the chain carries Phosphoserine. Residue Lys-687 forms a Glycyl lysine isopeptide (Lys-Gly) (interchain with G-Cter in ubiquitin) linkage. A phosphoserine mark is found at Ser-699 and Ser-711. Thr-716 is modified (phosphothreonine). Residues Ser-736, Ser-767, Ser-790, Ser-795, and Ser-813 each carry the phosphoserine modification. A helical membrane pass occupies residues 859–879 (LIFVLIWCLVIFLAEVAASLV). Positions 859 to 1155 (LIFVLIWCLV…AVNSSIDVDS (297 aa)) constitute an ABC transmembrane type-1 2 domain. The Extracellular portion of the chain corresponds to 880-918 (VLWLLKETPPQDSGNSTKGANNSYAVIITSTSSYYVFYI). Residues Asn-894 and Asn-900 are each glycosylated (N-linked (GlcNAc...) asparagine). Residues 919–939 (YVGVADTLLALGLFRGLPLVH) form a discontinuously helical membrane-spanning segment. Residues 940 to 990 (TLITVSKILHHKMLHSVLQAPMSTLNTLKAGGILNRFSKDMAILDDLLPLT) are Cytoplasmic-facing. A helical membrane pass occupies residues 991–1011 (IFDFIQLLLIVIGAVAVVSVL). The Extracellular segment spans residues 1012–1013 (QP). A helical transmembrane segment spans residues 1014–1034 (YIFLATVPVIAAFIILRAYFL). Residues 1035 to 1095 (HTSQQLKQLE…TANWFLYLST (61 aa)) are Cytoplasmic-facing. Residues 1096-1116 (LRWFQMRIEMIFVIFFIAVTF) form a helical membrane-spanning segment. At 1117–1130 (ISILTTGEGEGTVG) the chain is on the extracellular side. A helical transmembrane segment spans residues 1131–1151 (IILTLAMNIMSTLQWAVNSSI). At 1152–1481 (DVDSLMRSVS…TEEEVQETRL (330 aa)) the chain is on the cytoplasmic side. An ABC transporter 2 domain is found at 1211 to 1444 (MTVKDLTAKY…KSLFQQAISS (234 aa)). ATP is bound by residues Tyr-1220 and 1245 to 1252 (GRTGSGKS). Residues 1387–1481 (RTLKQAFADC…TEEEVQETRL (95 aa)) are interaction with GORASP2. The S-palmitoyl cysteine moiety is linked to residue Cys-1396. Phosphoserine is present on residues Ser-1445 and Ser-1457. The tract at residues 1449–1481 (KLFPHRNSSKHKSRSKIAALQEETEEEVQETRL) is disordered. Positions 1451-1463 (FPHRNSSKHKSRS) are enriched in basic residues. Acidic residues predominate over residues 1470-1481 (EETEEEVQETRL). The PDZ-binding signature appears at 1479-1481 (TRL).

This sequence belongs to the ABC transporter superfamily. ABCC family. CFTR transporter (TC 3.A.1.202) subfamily. In terms of assembly, monomer; does not require oligomerization for channel activity. May form oligomers in the membrane. Interacts with SLC26A3, SLC26A6 and NHERF1. Interacts with SHANK2. Interacts with MYO6. Interacts (via C-terminus) with GOPC (via PDZ domain); this promotes CFTR internalization and thereby decreases channel activity. Interacts with SLC4A7 through NHERF1. Found in a complex with MYO5B and RAB11A. Interacts with ANO1. Interacts with SLC26A8. Interacts with AHCYL1; the interaction increases CFTR activity. Interacts with CSE1L. The core-glycosylated form interacts with GORASP2 (via PDZ GRASP-type 1 domain) in respone to ER stress. Interacts with MARCHF2; the interaction leads to CFTR ubiqtuitination and degradation. Interacts with ADGRG2. In terms of processing, N-glycosylated. Phosphorylated; cAMP treatment promotes phosphorylation and activates the channel. Dephosphorylation decreases the ATPase activity (in vitro). Phosphorylation at PKA sites activates the channel. Phosphorylation at PKC sites enhances the response to phosphorylation by PKA. Phosphorylated by AMPK; this inhibits channel activity. Post-translationally, ubiquitinated, leading to its degradation in the lysosome. Deubiquitination by USP10 in early endosomes enhances its endocytic recycling to the cell membrane. Ubiquitinated by RNF185 during ER stress. Ubiquitinated by MARCHF2.

The protein localises to the apical cell membrane. It localises to the early endosome membrane. Its subcellular location is the cell membrane. It is found in the recycling endosome membrane. The protein resides in the endoplasmic reticulum membrane. The protein localises to the nucleus. It catalyses the reaction ATP + H2O + closed Cl(-) channel = ADP + phosphate + open Cl(-) channel.. It carries out the reaction chloride(in) = chloride(out). The enzyme catalyses hydrogencarbonate(in) = hydrogencarbonate(out). The catalysed reaction is ATP + H2O = ADP + phosphate + H(+). In terms of biological role, epithelial ion channel that plays an important role in the regulation of epithelial ion and water transport and fluid homeostasis. Mediates the transport of chloride ions across the cell membrane. Possesses an intrinsic ATPase activity and utilizes ATP to gate its channel; the passive flow of anions through the channel is gated by cycles of ATP binding and hydrolysis by the ATP-binding domains. The ion channel is also permeable to HCO(3)(-); selectivity depends on the extracellular chloride concentration. Exerts its function also by modulating the activity of other ion channels and transporters. Contributes to the regulation of the pH and the ion content of the epithelial fluid layer. Modulates the activity of the epithelial sodium channel (ENaC) complex, in part by regulating the cell surface expression of the ENaC complex. May regulate bicarbonate secretion and salvage in epithelial cells by regulating the transporter SLC4A7. Can inhibit the chloride channel activity of ANO1. Plays a role in the chloride and bicarbonate homeostasis during sperm epididymal maturation and capacitation. In Equus caballus (Horse), this protein is Cystic fibrosis transmembrane conductance regulator.